The chain runs to 260 residues: Lysine/arginine/ornithine-binding periplasmic protein (260 aa).

Residues 1 to 22 (MKKSILALSLLVGLSTAASSYA) form the signal peptide. Position 33 (Asp33) interacts with L-arginine. Asp33 provides a ligand contact to L-lysine. Asp33 provides a ligand contact to L-ornithine. A disulfide bridge connects residues Cys60 and Cys67. L-arginine-binding residues include Ser91, Ser92, Ser94, Arg99, Thr143, and Asp183. Residues Ser91, Ser92, Ser94, Arg99, Thr143, and Asp183 each contribute to the L-ornithine site. Ser92, Ser94, Arg99, and Thr143 together coordinate L-lysine.

This sequence belongs to the bacterial solute-binding protein 3 family. The complex is composed of two ATP-binding proteins (HisP), two transmembrane proteins (HisM and HisQ) and a solute-binding protein (ArgT).

The protein localises to the periplasm. Part of the ABC transporter complex HisPMQ-ArgT involved in lysine/arginine/ornithine transport. Binds lysine, arginine and ornithine. Stimulates ATPase activity of HisP. In Escherichia coli (strain K12), this protein is Lysine/arginine/ornithine-binding periplasmic protein (argT).